We begin with the raw amino-acid sequence, 216 residues long: Probable transaldolase (216 aa).

Catalysis depends on lysine 84, which acts as the Schiff-base intermediate with substrate.

It belongs to the transaldolase family. Type 3B subfamily.

Its subcellular location is the cytoplasm. It carries out the reaction D-sedoheptulose 7-phosphate + D-glyceraldehyde 3-phosphate = D-erythrose 4-phosphate + beta-D-fructose 6-phosphate. It participates in carbohydrate degradation; pentose phosphate pathway; D-glyceraldehyde 3-phosphate and beta-D-fructose 6-phosphate from D-ribose 5-phosphate and D-xylulose 5-phosphate (non-oxidative stage): step 2/3. Its function is as follows. Transaldolase is important for the balance of metabolites in the pentose-phosphate pathway. The sequence is that of Probable transaldolase from Lysinibacillus sphaericus (strain C3-41).